We begin with the raw amino-acid sequence, 65 residues long: Alpha-insect toxin BotIT1 (65 aa).

An LCN-type CS-alpha/beta domain is found at 2–64 (RDAYIAQNYN…VPIRIPGKCH (63 aa)). Intrachain disulfides connect cysteine 12–cysteine 63, cysteine 16–cysteine 36, cysteine 22–cysteine 46, and cysteine 26–cysteine 48.

This sequence belongs to the long (4 C-C) scorpion toxin superfamily. Sodium channel inhibitor family. Alpha subfamily. As to expression, expressed by the venom gland.

Its subcellular location is the secreted. Alpha toxins bind voltage-independently at site-3 of sodium channels (Nav) and inhibit the inactivation of the activated channels, thereby blocking neuronal transmission. This contractive toxin is highly toxic to insects and barely toxic to mammals. The sequence is that of Alpha-insect toxin BotIT1 from Buthus occitanus tunetanus (Common European scorpion).